Consider the following 162-residue polypeptide: Serine-protein kinase RsbW (162 aa).

This sequence belongs to the anti-sigma-factor family.

The catalysed reaction is L-seryl-[protein] + ATP = O-phospho-L-seryl-[protein] + ADP + H(+). It catalyses the reaction L-threonyl-[protein] + ATP = O-phospho-L-threonyl-[protein] + ADP + H(+). Negative regulator of sigma-B activity. Phosphorylates and inactivates its specific antagonist protein, RsbV. Upon phosphorylation of RsbV, RsbW is released and binds to sigma-B, thereby blocking its ability to form an RNA polymerase holoenzyme (E-sigma-B). This chain is Serine-protein kinase RsbW, found in Bacillus pumilus (strain SAFR-032).